Here is a 554-residue protein sequence, read N- to C-terminus: Methyl-CpG-binding domain protein 4 (554 aa).

The interval Met1–Asp23 is disordered. Positions Ser63–Lys135 constitute an MBD domain. Residues Gln154 to Asn164 are compositionally biased toward polar residues. Disordered regions lie at residues Gln154–Asn195 and Asp209–Ala252. The segment covering Leu178 to Asn195 has biased composition (low complexity). 2 positions are modified to phosphoserine: Ser296 and Ser402. The active site involves Asp534.

Interacts with MLH1.

It localises to the nucleus. Functionally, mismatch-specific DNA N-glycosylase involved in DNA repair. Has thymine glycosylase activity and is specific for G:T mismatches within methylated and unmethylated CpG sites. Can also remove uracil or 5-fluorouracil in G:U mismatches. Has no lyase activity. Was first identified as methyl-CpG-binding protein. The chain is Methyl-CpG-binding domain protein 4 (Mbd4) from Mus musculus (Mouse).